Reading from the N-terminus, the 502-residue chain is Glycerol kinase (502 aa).

Position 14 (T14) interacts with ADP. T14, T15, and S16 together coordinate ATP. T14 contributes to the sn-glycerol 3-phosphate binding site. Position 18 (R18) interacts with ADP. Sn-glycerol 3-phosphate contacts are provided by R84, E85, Y136, and D246. Positions 84, 85, 136, 246, and 247 each coordinate glycerol. Positions 268 and 311 each coordinate ADP. Positions 268, 311, 315, and 412 each coordinate ATP. ADP contacts are provided by G412 and N416.

This sequence belongs to the FGGY kinase family. As to quaternary structure, homotetramer and homodimer (in equilibrium). Heterodimer with EIIA-Glc. Binds 1 zinc ion per glycerol kinase EIIA-Glc dimer. The zinc ion is important for dimerization.

The enzyme catalyses glycerol + ATP = sn-glycerol 3-phosphate + ADP + H(+). Its pathway is polyol metabolism; glycerol degradation via glycerol kinase pathway; sn-glycerol 3-phosphate from glycerol: step 1/1. With respect to regulation, activity of this regulatory enzyme is affected by several metabolites. Allosterically and non-competitively inhibited by fructose 1,6-bisphosphate (FBP) and unphosphorylated phosphocarrier protein EIIA-Glc (III-Glc), an integral component of the bacterial phosphotransferase (PTS) system. Key enzyme in the regulation of glycerol uptake and metabolism. Catalyzes the phosphorylation of glycerol to yield sn-glycerol 3-phosphate. This Salmonella typhimurium (strain LT2 / SGSC1412 / ATCC 700720) protein is Glycerol kinase.